A 617-amino-acid polypeptide reads, in one-letter code: ATP-dependent RNA helicase DBP1 (617 aa).

Residues 1-90 (MADLPQKVSN…TSANYNRGGS (90 aa)) form a disordered region. Positions 7–17 (KVSNLSINNKE) are enriched in polar residues. The segment covering 38-58 (PSFERSTPKQEDKVTGGDFFR) has biased composition (basic and acidic residues). Over residues 79-90 (GGTSANYNRGGS) the composition is skewed to polar residues. The Q motif signature appears at 154 to 182 (LDFSSPPLDELLMENIKLASFTKPTPVQK). The Helicase ATP-binding domain maps to 185–374 (IPIVTKGRDL…RDFLDNYIFL (190 aa)). Residue 198–205 (AQTGSGKT) participates in ATP binding. A DEAD box motif is present at residues 318 to 321 (DEAD). The Helicase C-terminal domain maps to 385-545 (NITQRILYVD…EVPTFLSDLS (161 aa)). The disordered stretch occupies residues 542-617 (SDLSRQNSRG…GYGNSNASWW (76 aa)). Residues 580-594 (FGSTRPRNTGTSNWG) show a composition bias toward polar residues.

The protein belongs to the DEAD box helicase family. DDX3/DED1 subfamily.

The protein resides in the cytoplasm. It carries out the reaction ATP + H2O = ADP + phosphate + H(+). ATP-binding RNA helicase involved in translation initiation. Remodels RNA in response to ADP and ATP concentrations by facilitating disruption, but also formation of RNA duplexes. Redundant to DED1, may be required in conditions in which DED1 expression is decreased. This Saccharomyces cerevisiae (strain ATCC 204508 / S288c) (Baker's yeast) protein is ATP-dependent RNA helicase DBP1 (DBP1).